The primary structure comprises 528 residues: Ivanolysin (528 aa).

A signal peptide spans Met-1–Gln-23. Beta stranded transmembrane passes span Glu-213–Ala-226, Val-233–Lys-242, Ser-311–Thr-320, and Lys-328–Ala-340. A Conserved undecapeptide motif is present at residues Glu-482–Arg-492. Positions Thr-514–Leu-515 match the Cholesterol binding motif.

Belongs to the cholesterol-dependent cytolysin family. Homooligomeric pore complex of 35 to 50 subunits; when inserted in the host membrane.

It is found in the secreted. The protein localises to the host membrane. A cholesterol-dependent toxin that causes cytolysis by forming pores in cholesterol containing host membranes. After binding to target membranes, the protein undergoes a major conformation change, leading to its insertion in the host membrane and formation of an oligomeric pore complex. Cholesterol is required for binding to host membranes, membrane insertion and pore formation; cholesterol binding is mediated by a Thr-Leu pair in the C-terminus. Can be reversibly inactivated by oxidation. The sequence is that of Ivanolysin (ilo) from Listeria ivanovii.